Here is a 502-residue protein sequence, read N- to C-terminus: Maturase K (502 aa).

This sequence belongs to the intron maturase 2 family. MatK subfamily.

It localises to the plastid. The protein localises to the chloroplast. Usually encoded in the trnK tRNA gene intron. Probably assists in splicing its own and other chloroplast group II introns. In Stanleya pinnata (Prince's plume), this protein is Maturase K.